Consider the following 80-residue polypeptide: Exodeoxyribonuclease 7 small subunit (80 aa).

Belongs to the XseB family. Heterooligomer composed of large and small subunits.

Its subcellular location is the cytoplasm. It catalyses the reaction Exonucleolytic cleavage in either 5'- to 3'- or 3'- to 5'-direction to yield nucleoside 5'-phosphates.. Its function is as follows. Bidirectionally degrades single-stranded DNA into large acid-insoluble oligonucleotides, which are then degraded further into small acid-soluble oligonucleotides. The polypeptide is Exodeoxyribonuclease 7 small subunit (Escherichia coli O139:H28 (strain E24377A / ETEC)).